Reading from the N-terminus, the 350-residue chain is Ion-translocating oxidoreductase complex subunit D (350 aa).

The next 4 helical transmembrane spans lie at 36 to 56 (FYFF…IALL), 68 to 88 (PIIS…IGVS), 89 to 109 (IPSI…IVIV), and 120 to 140 (IFNP…VQMT). Position 185 is an FMN phosphoryl threonine (T185). The next 5 helical transmembrane spans lie at 212-232 (GFGV…LAML), 239-259 (WQIS…GYLL), 265-285 (IGPL…FIAT), 291-311 (ATSV…VYVI), and 315-335 (GGYP…APFI).

The protein belongs to the NqrB/RnfD family. The complex is composed of six subunits: RnfA, RnfB, RnfC, RnfD, RnfE and RnfG. Requires FMN as cofactor.

The protein localises to the cell inner membrane. In terms of biological role, part of a membrane-bound complex that couples electron transfer with translocation of ions across the membrane. The polypeptide is Ion-translocating oxidoreductase complex subunit D (Shewanella piezotolerans (strain WP3 / JCM 13877)).